The following is a 61-amino-acid chain: Small ribosomal subunit protein uS14 (61 aa).

Cys-24, Cys-27, Cys-40, and Cys-43 together coordinate Zn(2+).

It belongs to the universal ribosomal protein uS14 family. Zinc-binding uS14 subfamily. As to quaternary structure, part of the 30S ribosomal subunit. Contacts proteins S3 and S10. Zn(2+) is required as a cofactor.

In terms of biological role, binds 16S rRNA, required for the assembly of 30S particles and may also be responsible for determining the conformation of the 16S rRNA at the A site. The sequence is that of Small ribosomal subunit protein uS14 from Treponema denticola (strain ATCC 35405 / DSM 14222 / CIP 103919 / JCM 8153 / KCTC 15104).